The following is a 382-amino-acid chain: Mitogen-activated protein kinase 9 (382 aa).

Positions 26–321 (YQQLKPIGSG…VDEALRHPYI (296 aa)) constitute a Protein kinase domain. ATP-binding positions include 33 to 38 (GSGAQG) and Lys55. Asp151 serves as the catalytic Proton acceptor. Thr183 carries the post-translational modification Phosphothreonine. The TXY motif lies at 183–185 (TPY). Tyr185 carries the post-translational modification Phosphotyrosine.

This sequence belongs to the protein kinase superfamily. CMGC Ser/Thr protein kinase family. MAP kinase subfamily. It depends on Mg(2+) as a cofactor. In terms of processing, dually phosphorylated on Thr-183 and Tyr-185, which activates the enzyme. In terms of tissue distribution, expressed in the neuroepithelium of developing brain at stages 16 to 26.

It catalyses the reaction L-seryl-[protein] + ATP = O-phospho-L-seryl-[protein] + ADP + H(+). The enzyme catalyses L-threonyl-[protein] + ATP = O-phospho-L-threonyl-[protein] + ADP + H(+). Activated by threonine and tyrosine phosphorylation. Responds to activation by environmental stress and pro-inflammatory cytokines by phosphorylating a number of transcription factors, primarily components of AP-1 such as JUN and ATF2 and thus regulates AP-1 transcriptional activity. May play a role in the development of the central nervous system during embryogenesis. May play a role in the regulation of the circadian clock. This is Mitogen-activated protein kinase 9 (MAPK9) from Gallus gallus (Chicken).